A 179-amino-acid polypeptide reads, in one-letter code: Inosine/xanthosine triphosphatase (179 aa).

E71 serves as a coordination point for Mg(2+). A substrate-binding site is contributed by 71 to 72 (EA).

The protein belongs to the YjjX NTPase family. Homodimer. Mg(2+) is required as a cofactor. The cofactor is Mn(2+).

It carries out the reaction XTP + H2O = XDP + phosphate + H(+). The catalysed reaction is ITP + H2O = IDP + phosphate + H(+). Functionally, phosphatase that hydrolyzes non-canonical purine nucleotides such as XTP and ITP to their respective diphosphate derivatives. Probably excludes non-canonical purines from DNA/RNA precursor pool, thus preventing their incorporation into DNA/RNA and avoiding chromosomal lesions. The sequence is that of Inosine/xanthosine triphosphatase from Shewanella sp. (strain MR-7).